We begin with the raw amino-acid sequence, 641 residues long: Threonine--tRNA ligase (641 aa).

In terms of domain architecture, TGS spans 1–61 (MPVITLPDGS…ENDTELAIVT (61 aa)). Residues 242-533 (DHRKIGKKLG…LIEEYEGAFP (292 aa)) are catalytic. Zn(2+) contacts are provided by Cys333, His384, and His510.

Belongs to the class-II aminoacyl-tRNA synthetase family. Homodimer. It depends on Zn(2+) as a cofactor.

It is found in the cytoplasm. The enzyme catalyses tRNA(Thr) + L-threonine + ATP = L-threonyl-tRNA(Thr) + AMP + diphosphate + H(+). Functionally, catalyzes the attachment of threonine to tRNA(Thr) in a two-step reaction: L-threonine is first activated by ATP to form Thr-AMP and then transferred to the acceptor end of tRNA(Thr). Also edits incorrectly charged L-seryl-tRNA(Thr). The polypeptide is Threonine--tRNA ligase (Marinobacter nauticus (strain ATCC 700491 / DSM 11845 / VT8) (Marinobacter aquaeolei)).